Here is a 525-residue protein sequence, read N- to C-terminus: GMP synthase [glutamine-hydrolyzing] (525 aa).

The Glutamine amidotransferase type-1 domain occupies 9-207 (RILILDFGSQ…ILDICGCEAL (199 aa)). Cys-86 serves as the catalytic Nucleophile. Active-site residues include His-181 and Glu-183. The GMPS ATP-PPase domain occupies 208-400 (WTPSKIAEDA…LGLPYDMVYR (193 aa)). 235-241 (SGGVDSS) contributes to the ATP binding site.

Homodimer.

It carries out the reaction XMP + L-glutamine + ATP + H2O = GMP + L-glutamate + AMP + diphosphate + 2 H(+). It functions in the pathway purine metabolism; GMP biosynthesis; GMP from XMP (L-Gln route): step 1/1. Its function is as follows. Catalyzes the synthesis of GMP from XMP. This chain is GMP synthase [glutamine-hydrolyzing], found in Pseudomonas fluorescens (strain ATCC BAA-477 / NRRL B-23932 / Pf-5).